The primary structure comprises 291 residues: Oligopeptide transport system permease protein OppC (291 aa).

The next 6 helical transmembrane spans lie at 22–42 (VASL…PPLL), 85–105 (MLIG…VGAI), 116–136 (TLMW…IAIV), 142–162 (NSAN…MISS), 209–229 (ALNV…GFGI), and 247–267 (ATAF…ILVC). The ABC transmembrane type-1 domain occupies 81–272 (MQKSMLIGVC…LILVCANLTG (192 aa)).

Belongs to the binding-protein-dependent transport system permease family. OppBC subfamily. In terms of assembly, the complex is composed of an ATP-binding protein (OppD), two transmembrane proteins (OppB and OppC) and a solute-binding protein (OppA).

Its subcellular location is the cell inner membrane. Its function is as follows. Part of the ABC transporter complex OppABCD involved in the uptake of oligopeptides. Responsible for the translocation of the substrate across the membrane. In Mycobacterium bovis (strain ATCC BAA-935 / AF2122/97), this protein is Oligopeptide transport system permease protein OppC.